The sequence spans 1230 residues: Serine/threonine-protein kinase PDK1 (1230 aa).

Positions 1 to 277 (MASSHFGPAS…ASSGALKKHS (277 aa)) are disordered. Over residues 34 to 50 (SSSSSSRSTTTCSSTSS) the composition is skewed to low complexity. A compositionally biased stretch (polar residues) spans 62–76 (ETSTAATSRSQLPSN). The segment covering 77-87 (RHSENEAEHDT) has biased composition (basic and acidic residues). 2 stretches are compositionally biased toward polar residues: residues 107–117 (PRSNRLGTSPQ) and 140–175 (SKRQ…SSTI). Positions 185 to 202 (PNDRLSHDRESHSAERPR) are enriched in basic and acidic residues. Residues 217–226 (STPSSPTNSY) are compositionally biased toward polar residues. Over residues 252 to 262 (ARDGDDRERRQ) the composition is skewed to basic and acidic residues. Residues 281–801 (WVLGEELGVG…ITFIKTHPFF (521 aa)) enclose the Protein kinase domain. ATP contacts are provided by residues 291–293 (SYS) and K319. 2 disordered regions span residues 345–522 (LSDP…RSGA) and 534–597 (TLPP…KMSA). Polar residues-rich tracts occupy residues 378-397 (TASI…TVSN) and 408-433 (IVTT…SPTA). Composition is skewed to basic and acidic residues over residues 466-494 (GGED…DNMT) and 502-521 (VREE…ERSG). Residues 535–544 (LPPPQIPSTP) are compositionally biased toward pro residues. A compositionally biased stretch (basic and acidic residues) spans 555–569 (DGHRTSRETPRDRPH). Residues 621 to 623 (SLA) and E627 contribute to the ATP site. The Proton acceptor role is filled by D666. Residues E670 and D684 each coordinate ATP. The segment covering 850 to 859 (EDEDGFEYDA) has biased composition (acidic residues). Disordered regions lie at residues 850-871 (EDED…GGAV), 907-955 (LGED…GGNR), 972-1035 (GGGM…SDEA), and 1116-1152 (EADG…GGGH). Residues 927 to 942 (GKREKEVEKKKGEKAR) show a composition bias toward basic and acidic residues. Composition is skewed to low complexity over residues 977 to 992 (GSAT…RTPG), 1002 to 1030 (RPGS…GASM), and 1120 to 1137 (DPAG…SHVE). Residues 1138 to 1152 (SGGGGVGGGGRGGGH) are compositionally biased toward gly residues.

It belongs to the protein kinase superfamily. AGC Ser/Thr protein kinase family. PDPK1 subfamily.

It catalyses the reaction L-seryl-[protein] + ATP = O-phospho-L-seryl-[protein] + ADP + H(+). The catalysed reaction is L-threonyl-[protein] + ATP = O-phospho-L-threonyl-[protein] + ADP + H(+). Its function is as follows. Serine/threonine-protein kinase that functions in the sphingolipid-mediated signaling pathway, regulating organization of the plasma membrane. May phosphorylate PKC1 to activate the cell integrity MAPK cascade during cell wall and membrane stress. May regulate sphingolipid metabolism upstream of YPK1. The sequence is that of Serine/threonine-protein kinase PDK1 from Cryptococcus neoformans var. grubii serotype A (strain H99 / ATCC 208821 / CBS 10515 / FGSC 9487) (Filobasidiella neoformans var. grubii).